Here is a 328-residue protein sequence, read N- to C-terminus: UPF0194 membrane protein YPA_1093 (328 aa).

The first 22 residues, 1 to 22 (MNRKKIIVAAVIVALLATLAYG), serve as a signal peptide directing secretion. 2 coiled-coil regions span residues 80-109 (YLNA…REEE) and 141-209 (KAVS…ILLA).

It belongs to the UPF0194 family.

The protein localises to the periplasm. This is UPF0194 membrane protein YPA_1093 from Yersinia pestis bv. Antiqua (strain Antiqua).